A 34-amino-acid chain; its full sequence is Small ribosomal subunit protein uS2c (34 aa).

The protein belongs to the universal ribosomal protein uS2 family.

Its subcellular location is the plastid. The protein resides in the chloroplast. The chain is Small ribosomal subunit protein uS2c (rps2) from Ochrosphaera neapolitana.